Here is a 365-residue protein sequence, read N- to C-terminus: MSRPVPNPGILDIAPYTPGKSPVPEAGRKVFKLSANETPFGPSPKAMDAYRNAVAHLQDYPEGTSRVLREAIGRAYGLDPDRIICGAGSDEILNLLAHVYLSHGDEAVSTTHSFLVYPIATTANGAENVVAPEVDYTADVDAILQRVTPKTKMVWLANPNNPTGTYLPFDEIKRLHGGLPPHVLLVLDAAYSDYVSRNDYELGIELAATTGNTVLTHTFSKIHGLAALRIGWMFGPAHVVDAVNRIRGPFNVSTPAMLAAAAAIGDTAHVQMSKVHTEKWRNWLTDEVTKLGLKVTPSVTNFILIHFPTTKGKTASEADAFLTKRGLVLRALDNYGLPNALRMTIGTEEANRLVADGLRDFMAQK.

N6-(pyridoxal phosphate)lysine is present on lysine 221.

Belongs to the class-II pyridoxal-phosphate-dependent aminotransferase family. Histidinol-phosphate aminotransferase subfamily. As to quaternary structure, homodimer. Requires pyridoxal 5'-phosphate as cofactor.

It carries out the reaction L-histidinol phosphate + 2-oxoglutarate = 3-(imidazol-4-yl)-2-oxopropyl phosphate + L-glutamate. The protein operates within amino-acid biosynthesis; L-histidine biosynthesis; L-histidine from 5-phospho-alpha-D-ribose 1-diphosphate: step 7/9. The chain is Histidinol-phosphate aminotransferase from Nitrobacter hamburgensis (strain DSM 10229 / NCIMB 13809 / X14).